Reading from the N-terminus, the 513-residue chain is ATP synthase subunit alpha (513 aa).

169–176 (GDRQTGKT) contributes to the ATP binding site.

Belongs to the ATPase alpha/beta chains family. As to quaternary structure, F-type ATPases have 2 components, CF(1) - the catalytic core - and CF(0) - the membrane proton channel. CF(1) has five subunits: alpha(3), beta(3), gamma(1), delta(1), epsilon(1). CF(0) has three main subunits: a(1), b(2) and c(9-12). The alpha and beta chains form an alternating ring which encloses part of the gamma chain. CF(1) is attached to CF(0) by a central stalk formed by the gamma and epsilon chains, while a peripheral stalk is formed by the delta and b chains.

Its subcellular location is the cell inner membrane. It catalyses the reaction ATP + H2O + 4 H(+)(in) = ADP + phosphate + 5 H(+)(out). Produces ATP from ADP in the presence of a proton gradient across the membrane. The alpha chain is a regulatory subunit. The protein is ATP synthase subunit alpha of Polynucleobacter necessarius subsp. necessarius (strain STIR1).